The sequence spans 601 residues: NADH-quinone oxidoreductase subunit C/D (601 aa).

An NADH dehydrogenase I subunit C region spans residues 1–192 (MIVPDLVADA…PPYSLTEDQE (192 aa)). The tract at residues 216-601 (DFMFLNLGPN…IDFVMADVDR (386 aa)) is NADH dehydrogenase I subunit D.

The protein in the N-terminal section; belongs to the complex I 30 kDa subunit family. This sequence in the C-terminal section; belongs to the complex I 49 kDa subunit family. NDH-1 is composed of 13 different subunits. Subunits NuoB, CD, E, F, and G constitute the peripheral sector of the complex.

The protein resides in the cell inner membrane. The enzyme catalyses a quinone + NADH + 5 H(+)(in) = a quinol + NAD(+) + 4 H(+)(out). Its function is as follows. NDH-1 shuttles electrons from NADH, via FMN and iron-sulfur (Fe-S) centers, to quinones in the respiratory chain. The immediate electron acceptor for the enzyme in this species is believed to be ubiquinone. Couples the redox reaction to proton translocation (for every two electrons transferred, four hydrogen ions are translocated across the cytoplasmic membrane), and thus conserves the redox energy in a proton gradient. The polypeptide is NADH-quinone oxidoreductase subunit C/D (Gluconacetobacter diazotrophicus (strain ATCC 49037 / DSM 5601 / CCUG 37298 / CIP 103539 / LMG 7603 / PAl5)).